We begin with the raw amino-acid sequence, 371 residues long: GDP-perosamine synthase (371 aa).

Lys186 carries the post-translational modification N6-(pyridoxal phosphate)lysine.

This sequence belongs to the DegT/DnrJ/EryC1 family. As to quaternary structure, homodimer. Pyridoxal 5'-phosphate is required as a cofactor.

It carries out the reaction GDP-alpha-D-perosamine + 2-oxoglutarate = GDP-4-dehydro-alpha-D-rhamnose + L-glutamate. It functions in the pathway bacterial outer membrane biogenesis; LPS O-antigen biosynthesis. Functionally, catalyzes the synthesis of GDP-perosamine from GDP-4-keto-6-deoxy-D-mannose and L-glutamate. Can use only L-glutamate as amino donor. In vitro, can also use GDP-4-keto-3,6-dideoxymannose to produce GDP-3-deoxyperosamine. Involved in the formation of S-LPS, which is required for attachment of the protein S-layer to the outer membrane surface. In Caulobacter vibrioides (strain ATCC 19089 / CIP 103742 / CB 15) (Caulobacter crescentus), this protein is GDP-perosamine synthase.